Reading from the N-terminus, the 692-residue chain is Elongation factor G (692 aa).

One can recognise a tr-type G domain in the interval 8–282 (EKTRNIGIMA…AVVEYMPAPT (275 aa)). GTP contacts are provided by residues 17 to 24 (AHIDAGKT), 81 to 85 (DTPGH), and 135 to 138 (NKMD). The tract at residues 285 to 304 (PNIKGVHPETGEADERHSSD) is disordered. The span at 290–304 (VHPETGEADERHSSD) shows a compositional bias: basic and acidic residues.

The protein belongs to the TRAFAC class translation factor GTPase superfamily. Classic translation factor GTPase family. EF-G/EF-2 subfamily.

It localises to the cytoplasm. Functionally, catalyzes the GTP-dependent ribosomal translocation step during translation elongation. During this step, the ribosome changes from the pre-translocational (PRE) to the post-translocational (POST) state as the newly formed A-site-bound peptidyl-tRNA and P-site-bound deacylated tRNA move to the P and E sites, respectively. Catalyzes the coordinated movement of the two tRNA molecules, the mRNA and conformational changes in the ribosome. The sequence is that of Elongation factor G from Desulfitobacterium hafniense (strain DSM 10664 / DCB-2).